The chain runs to 86 residues: Large ribosomal subunit protein uL23 (86 aa).

It belongs to the universal ribosomal protein uL23 family. Part of the 50S ribosomal subunit. Contacts protein L29.

Binds to 23S rRNA. One of the proteins that surrounds the polypeptide exit tunnel on the outside of the ribosome. This is Large ribosomal subunit protein uL23 from Methanobrevibacter smithii (strain ATCC 35061 / DSM 861 / OCM 144 / PS).